The primary structure comprises 187 residues: MKVSAVETGEISQVSAPRKGMIRGLSIMDFILRIVAAIGTLGSALSTGTTRETLPFTTQFVKFRAVFDDLPTFVFFVTSNSIVCGYLVLSLALSFFHIIRRSSAAKSRILLVFLDTVMFGLLTTGAAAAGTIVYVSHYGNVNANWFPFCGQYNHFCERISGSLIGSFIAVVIFMIIILMSAVSISKH.

Over 1–24 (MKVSAVETGEISQVSAPRKGMIRG) the chain is Cytoplasmic. The chain crosses the membrane as a helical span at residues 25–45 (LSIMDFILRIVAAIGTLGSAL). Over 46 to 72 (STGTTRETLPFTTQFVKFRAVFDDLPT) the chain is Extracellular. A helical transmembrane segment spans residues 73-93 (FVFFVTSNSIVCGYLVLSLAL). Over 94-108 (SFFHIIRRSSAAKSR) the chain is Cytoplasmic. The chain crosses the membrane as a helical span at residues 109–129 (ILLVFLDTVMFGLLTTGAAAA). Topologically, residues 130 to 163 (GTIVYVSHYGNVNANWFPFCGQYNHFCERISGSL) are extracellular. A helical transmembrane segment spans residues 164-184 (IGSFIAVVIFMIIILMSAVSI). Residues 185–187 (SKH) are Cytoplasmic-facing.

Belongs to the Casparian strip membrane proteins (CASP) family. As to quaternary structure, homodimer and heterodimers.

It is found in the cell membrane. The polypeptide is CASP-like protein 2 (Lotus japonicus (Lotus corniculatus var. japonicus)).